We begin with the raw amino-acid sequence, 940 residues long: Valine--tRNA ligase (940 aa).

The 'HIGH' region motif lies at 47 to 57 (PNVTGVLHMGH). Residues 564–568 (KLSKS) carry the 'KMSKS' region motif. K567 is an ATP binding site. Positions 873-905 (EEHLLKEKGRLEKERVRLERAVENLERLLGDES) form a coiled coil.

The protein belongs to the class-I aminoacyl-tRNA synthetase family. ValS type 1 subfamily. In terms of assembly, monomer.

The protein resides in the cytoplasm. The enzyme catalyses tRNA(Val) + L-valine + ATP = L-valyl-tRNA(Val) + AMP + diphosphate. Functionally, catalyzes the attachment of valine to tRNA(Val). As ValRS can inadvertently accommodate and process structurally similar amino acids such as threonine, to avoid such errors, it has a 'posttransfer' editing activity that hydrolyzes mischarged Thr-tRNA(Val) in a tRNA-dependent manner. This chain is Valine--tRNA ligase, found in Chlamydia pneumoniae (Chlamydophila pneumoniae).